We begin with the raw amino-acid sequence, 155 residues long: Small ribosomal subunit protein uS7c (155 aa).

It belongs to the universal ribosomal protein uS7 family. As to quaternary structure, part of the 30S ribosomal subunit.

It is found in the plastid. The protein localises to the chloroplast. In terms of biological role, one of the primary rRNA binding proteins, it binds directly to 16S rRNA where it nucleates assembly of the head domain of the 30S subunit. The sequence is that of Small ribosomal subunit protein uS7c (rps7) from Butomus umbellatus (Flowering rush).